The primary structure comprises 489 residues: Alpha-amylase (489 aa).

Positions 1 to 16 (HFKPILVLCLATLALG) are cleaved as a signal peptide. An intrachain disulfide couples C44 to C102. Ca(2+)-binding residues include N116, R164, and D173. C152 and C166 form a disulfide bridge. R201 provides a ligand contact to chloride. D203 functions as the Nucleophile in the catalytic mechanism. H207 provides a ligand contact to Ca(2+). The active-site Proton donor is E240. The chloride site is built by N303 and R339. 2 cysteine pairs are disulfide-bonded: C372–C378 and C443–C455.

Belongs to the glycosyl hydrolase 13 family. Monomer. It depends on Ca(2+) as a cofactor. Chloride serves as cofactor.

The enzyme catalyses Endohydrolysis of (1-&gt;4)-alpha-D-glucosidic linkages in polysaccharides containing three or more (1-&gt;4)-alpha-linked D-glucose units.. The protein is Alpha-amylase of Tribolium castaneum (Red flour beetle).